The sequence spans 250 residues: MGQKVHPIGIRLGVVKRHNANWYANPKQYAEYLLKDLQVREFLTKKLKSAMVSNILIERPTGAAKVTISTARPGIVIGKKGEDIEKLQRELTNIMGVPAQVSINEIDRPDLDARLVAEAIASQLEKRVMFRRAMKRAVQNSMRAGAKGIKVEVSGRLGGAEIARTEWYREGRVPLHTLRADIDYATMRAETTYGTIGVKVWIFRGEILGGMKQVMNPAPQEERPAKRGRGRGEGQERRGRRSDRAADKGE.

The region spanning 39–107 (VREFLTKKLK…PAQVSINEID (69 aa)) is the KH type-2 domain. The interval 214–250 (VMNPAPQEERPAKRGRGRGEGQERRGRRSDRAADKGE) is disordered. Residues 220–250 (QEERPAKRGRGRGEGQERRGRRSDRAADKGE) show a composition bias toward basic and acidic residues.

Belongs to the universal ribosomal protein uS3 family. In terms of assembly, part of the 30S ribosomal subunit. Forms a tight complex with proteins S10 and S14.

In terms of biological role, binds the lower part of the 30S subunit head. Binds mRNA in the 70S ribosome, positioning it for translation. This Acinetobacter baylyi (strain ATCC 33305 / BD413 / ADP1) protein is Small ribosomal subunit protein uS3.